Here is a 98-residue protein sequence, read N- to C-terminus: Large ribosomal subunit protein uL23 (98 aa).

This sequence belongs to the universal ribosomal protein uL23 family. Part of the 50S ribosomal subunit. Contacts protein L29, and trigger factor when it is bound to the ribosome.

Functionally, one of the early assembly proteins it binds 23S rRNA. One of the proteins that surrounds the polypeptide exit tunnel on the outside of the ribosome. Forms the main docking site for trigger factor binding to the ribosome. The chain is Large ribosomal subunit protein uL23 from Cellvibrio japonicus (strain Ueda107) (Pseudomonas fluorescens subsp. cellulosa).